The sequence spans 33 residues: Cytochrome b6-f complex subunit 8 (33 aa).

Residues 2–22 form a helical membrane-spanning segment; the sequence is LFTFAWASLAAIFTFSIAMVV.

The protein belongs to the PetN family. The 4 large subunits of the cytochrome b6-f complex are cytochrome b6, subunit IV (17 kDa polypeptide, PetD), cytochrome f and the Rieske protein, while the 4 small subunits are PetG, PetL, PetM and PetN. The complex functions as a dimer.

It localises to the cellular thylakoid membrane. Its function is as follows. Component of the cytochrome b6-f complex, which mediates electron transfer between photosystem II (PSII) and photosystem I (PSI), cyclic electron flow around PSI, and state transitions. This is Cytochrome b6-f complex subunit 8 from Prochlorococcus marinus (strain MIT 9211).